We begin with the raw amino-acid sequence, 485 residues long: Velvet complex subunit B (485 aa).

In terms of domain architecture, Velvet spans 33-459; that stretch reads GRKHYSLEVV…GNQGQKLPLA (427 aa). A disordered region spans residues 107-353; it reads VLHPSSVDRH…PPPPRHTYTR (247 aa). Composition is skewed to polar residues over residues 134–155, 234–243, 267–304, and 326–341; these read APQS…TLSQ, RSPSSSTSDH, SISS…SPHS, and THSQ…QHVS.

Belongs to the velvet family. VelB subfamily. In terms of assembly, component of the heterotrimeric velvet complex composed of laeA, veA and velB; VeA acting as a bridging protein between laeA and velB. Forms a heterodimeric complex with vosA; the formation of the velB-vosA complex is light-dependent.

Its subcellular location is the nucleus. It is found in the cytoplasm. In terms of biological role, component of the velvet transcription factor complex that controls sexual/asexual developmental ratio in response to light, promoting sexual development in the darkness while stimulating asexual sporulation under illumination. The velvet complex acts as a global regulator for secondary metabolite gene expression. Component of the velB-VosA heterodimeric complex that plays a dual role in activating genes associated with spore maturation and repressing certain development-associated genes. The velB-VosA complex binds DNA through the DNA-binding domain of vosA that recognizes an 11-nucleotide consensus sequence 5'-CTGGCCGCGGC-3' consisting of two motifs in the promoters of key developmental regulatory genes. This is Velvet complex subunit B from Laccaria bicolor (strain S238N-H82 / ATCC MYA-4686) (Bicoloured deceiver).